Consider the following 136-residue polypeptide: Small ribosomal subunit protein uS8c (136 aa).

This sequence belongs to the universal ribosomal protein uS8 family. Part of the 30S ribosomal subunit.

The protein localises to the plastid. It is found in the chloroplast. One of the primary rRNA binding proteins, it binds directly to 16S rRNA central domain where it helps coordinate assembly of the platform of the 30S subunit. The sequence is that of Small ribosomal subunit protein uS8c (rps8) from Citrus sinensis (Sweet orange).